A 581-amino-acid chain; its full sequence is Ezrin (581 aa).

An FERM domain is found at 2–295 (PKPINVRVTT…GNHELYMRRR (294 aa)). Lys60 carries the post-translational modification N6-acetyllysine. The short motif at 115-120 (IYCPPE) is the [IL]-x-C-x-x-[DE] motif element. Position 146 is a phosphotyrosine; by PDGFR (Tyr146). Residues 244–581 (EIRNISFNDK…KQRIDEFEAM (338 aa)) are interaction with SCYL3. A coiled-coil region spans residues 302–462 (VQQMKAQARE…QDDLVKTREE (161 aa)). A disordered region spans residues 306 to 341 (KAQAREEKHQKQLERQQLETEKKRRETVEREKEQMM). The segment covering 308–341 (QAREEKHQKQLERQQLETEKKRRETVEREKEQMM) has biased composition (basic and acidic residues). At Tyr354 the chain carries Phosphotyrosine; by PDGFR. Ser366 is subject to Phosphoserine. The residue at position 476 (Tyr476) is a Phosphotyrosine. Residues 534-560 (SQARDENKRTHNDIIHNENMRQGRDKY) form a disordered region. Over residues 535–560 (QARDENKRTHNDIIHNENMRQGRDKY) the composition is skewed to basic and acidic residues. Thr562 is modified (phosphothreonine; by ROCK2 and PKC/PRKCI).

As to quaternary structure, interacts with PALS1 and NHERF2. Found in a complex with EZR, PODXL and NHERF2. Interacts with MCC, PLEKHG6, PODXL, SCYL3/PACE1, NHERF1 and TMEM8B. Interacts (when phosphorylated) with FES/FPS. Interacts with dimeric S100P, the interaction may be activating through unmasking of F-actin binding sites. Identified in complexes that contain VIM, EZR, AHNAK, BFSP1, BFSP2, ANK2, PLEC, PRX and spectrin. Detected in a complex composed of at least EZR, AHNAK, PPL and PRX. Interacts with PDPN (via cytoplasmic domain); activates RHOA and promotes epithelial-mesenchymal transition. Interacts with SPN/CD43 cytoplasmic tail, CD44 and ICAM2. Interacts with SLC9A3; interaction targets SLC9A3 to the apical membrane. Interacts with SLC9A1; regulates interactions of SLC9A1 with cytoskeletal and promotes stress fiber formation. Interacts with CLIC5; may work together in a complex which also includes RDX and MYO6 to stabilize linkages between the plasma membrane and subjacent actin cytoskeleton at the base of stereocilia. Phosphorylated by tyrosine-protein kinases. Phosphorylation by ROCK2 suppresses the head-to-tail association of the N-terminal and C-terminal halves resulting in an opened conformation which is capable of actin and membrane-binding. Post-translationally, S-nitrosylation is induced by interferon-gamma and oxidatively-modified low-densitity lipoprotein (LDL(ox)) possibly implicating the iNOS-S100A8/9 transnitrosylase complex. Detected in eye lens fiber cells (at protein level).

It localises to the apical cell membrane. The protein localises to the cell projection. It is found in the microvillus membrane. The protein resides in the ruffle membrane. Its subcellular location is the cytoplasm. It localises to the cell cortex. The protein localises to the cytoskeleton. It is found in the microvillus. A head-to-tail association, of the N-terminal and C-terminal halves results in a closed conformation (inactive form) which is incapable of actin or membrane-binding. In terms of biological role, probably involved in connections of major cytoskeletal structures to the plasma membrane. In epithelial cells, required for the formation of microvilli and membrane ruffles on the apical pole. Along with PLEKHG6, required for normal macropinocytosis. This chain is Ezrin (EZR), found in Bos taurus (Bovine).